A 229-amino-acid chain; its full sequence is Ras-related protein Rab-33B (229 aa).

Asparagine 43, valine 44, glycine 45, lysine 46, threonine 47, cysteine 48, threonine 62, and threonine 65 together coordinate GTP. Position 47 (threonine 47) interacts with Mg(2+). The Switch 1 signature appears at 56 to 68 (GRFPDRTEATIGV). The Mg(2+) site is built by threonine 65 and aspartate 88. The Switch 2 signature appears at 89–108 (TAGQERFRKSMVQHYYRNVH). Residues glycine 91, asparagine 148, lysine 149, aspartate 151, alanine 179, and lysine 180 each coordinate GTP. S-geranylgeranyl cysteine attachment occurs at residues cysteine 227 and cysteine 229. At cysteine 229 the chain carries Cysteine methyl ester.

The protein belongs to the small GTPase superfamily. Rab family. In terms of assembly, interacts (GTP- and GDP-bound forms) with ATG16L1; the complex consists of a tetramer where two RAB33B molecules bind independently one molecule of the ATG16L1 homodimer; the interaction promotes ATG12-ATG5-ATG16L1 complex recruitment to phagophores. Interacts with ATG16L2; however interaction is approximately hundred times lower than for ATG16L1. Interacts with RIC1 (via C-terminus domain); the interaction is direct with a preference for RAB33B-GTP. Interacts with RGP1. The cofactor is Mg(2+). In terms of processing, prenylated.

Its subcellular location is the golgi apparatus membrane. The protein resides in the golgi apparatus. It is found in the cis-Golgi network. The protein localises to the preautophagosomal structure membrane. The catalysed reaction is GTP + H2O = GDP + phosphate + H(+). With respect to regulation, regulated by guanine nucleotide exchange factors (GEFs) which promote the exchange of bound GDP for free GTP. Regulated by GTPase activating proteins (GAPs) such as SGSM2 which increase the GTP hydrolysis activity. Inhibited by GDP dissociation inhibitors (GDIs). The small GTPases Rab are key regulators of intracellular membrane trafficking, from the formation of transport vesicles to their fusion with membranes. Rabs cycle between an inactive GDP-bound form and an active GTP-bound form that is able to recruit to membranes different sets of downstream effectors directly responsible for vesicle formation, movement, tethering and fusion. RAB33B acts, in coordination with RAB6A, to regulate intra-Golgi retrograde trafficking. Participates in autophagosome formation by recruiting the ATG12-ATG5-ATG16L1 complex to phagophores, probably in a nucleotide-independent manner. This is Ras-related protein Rab-33B (RAB33B) from Pongo abelii (Sumatran orangutan).